Here is a 247-residue protein sequence, read N- to C-terminus: UPF0280 protein MmarC6_1437 (247 aa).

It belongs to the UPF0280 family.

The polypeptide is UPF0280 protein MmarC6_1437 (Methanococcus maripaludis (strain C6 / ATCC BAA-1332)).